Here is a 530-residue protein sequence, read N- to C-terminus: DNA damage-binding protein cmr1 (530 aa).

2 disordered regions span residues 34-115 and 224-250; these read VGLF…RKSD and TKPV…LTTL. The span at 52-62 shows a compositional bias: basic residues; that stretch reads AKKKKPAPKKV. A compositionally biased stretch (basic and acidic residues) spans 89–108; sequence EVAKRKADEHDAALQEAERA. Residues 188–229 form a WD 1 repeat; the sequence is LTPERIYAMTFHPSESKPLIFAGDKMGHLGVLDASQTKPVSA. A compositionally biased stretch (acidic residues) spans 233–244; the sequence is DEDEEDDDDDPD. WD repeat units lie at residues 252-292, 302-339, 344-384, 389-430, 453-496, and 499-530; these read PHTR…SVER, VPIS…QDSA, LSDK…HKSP, EHES…ASWK, GRWV…LAQL, and DGIT…CLWM.

It belongs to the WD repeat DDB2/WDR76 family.

Its function is as follows. DNA-binding protein that binds to both single- and double-stranded DNA. Binds preferentially to UV-damaged DNA. May be involved in DNA-metabolic processes. The chain is DNA damage-binding protein cmr1 from Aspergillus terreus (strain NIH 2624 / FGSC A1156).